A 130-amino-acid chain; its full sequence is Small ribosomal subunit protein uS11c (130 aa).

The protein belongs to the universal ribosomal protein uS11 family. In terms of assembly, part of the 30S ribosomal subunit.

The protein resides in the plastid. Its subcellular location is the chloroplast. The sequence is that of Small ribosomal subunit protein uS11c from Cycas taitungensis (Prince sago).